The sequence spans 194 residues: Large ribosomal subunit protein uL5 (194 aa).

The protein belongs to the universal ribosomal protein uL5 family. Part of the 50S ribosomal subunit; part of the 5S rRNA/L5/L18/L25 subcomplex. Contacts the 5S rRNA and the P site tRNA. Forms a bridge to the 30S subunit in the 70S ribosome.

Functionally, this is one of the proteins that bind and probably mediate the attachment of the 5S RNA into the large ribosomal subunit, where it forms part of the central protuberance. In the 70S ribosome it contacts protein S13 of the 30S subunit (bridge B1b), connecting the 2 subunits; this bridge is implicated in subunit movement. Contacts the P site tRNA; the 5S rRNA and some of its associated proteins might help stabilize positioning of ribosome-bound tRNAs. The protein is Large ribosomal subunit protein uL5 of Frankia alni (strain DSM 45986 / CECT 9034 / ACN14a).